The primary structure comprises 465 residues: Cysteine--tRNA ligase (465 aa).

Cys-27 lines the Zn(2+) pocket. The 'HIGH' region motif lies at 29–39; the sequence is PTVYNFFHIGN. Positions 207, 232, and 236 each coordinate Zn(2+). The 'KMSKS' region motif lies at 264–268; sequence KMSKS. Residue Lys-267 participates in ATP binding.

This sequence belongs to the class-I aminoacyl-tRNA synthetase family. As to quaternary structure, monomer. The cofactor is Zn(2+).

It localises to the cytoplasm. The catalysed reaction is tRNA(Cys) + L-cysteine + ATP = L-cysteinyl-tRNA(Cys) + AMP + diphosphate. The sequence is that of Cysteine--tRNA ligase from Clostridium botulinum (strain Langeland / NCTC 10281 / Type F).